Reading from the N-terminus, the 273-residue chain is uncharacterized protein (273 aa).

Belongs to the AtsA family.

This is an uncharacterized protein from Mycobacterium tuberculosis (strain CDC 1551 / Oshkosh).